Reading from the N-terminus, the 529-residue chain is Probable DNA helicase MPN_340 (529 aa).

The region spanning 2–285 (EHLNQEQKAA…FYTTQNYRSI (284 aa)) is the UvrD-like helicase ATP-binding domain. 23 to 30 (SGAGTGKT) provides a ligand contact to ATP.

This sequence belongs to the helicase family. UvrD subfamily.

It carries out the reaction Couples ATP hydrolysis with the unwinding of duplex DNA by translocating in the 3'-5' direction.. The enzyme catalyses ATP + H2O = ADP + phosphate + H(+). The sequence is that of Probable DNA helicase MPN_340 from Mycoplasma pneumoniae (strain ATCC 29342 / M129 / Subtype 1) (Mycoplasmoides pneumoniae).